We begin with the raw amino-acid sequence, 370 residues long: Queuine tRNA-ribosyltransferase (370 aa).

D89 functions as the Proton acceptor in the catalytic mechanism. Substrate contacts are provided by residues D89–F93, D143, and G214. The tract at residues G245–D251 is RNA binding. D264 serves as the catalytic Nucleophile. The interval T269–R273 is RNA binding; important for wobble base 34 recognition. 4 residues coordinate Zn(2+): C302, C304, C307, and H333.

Belongs to the queuine tRNA-ribosyltransferase family. Homodimer. Within each dimer, one monomer is responsible for RNA recognition and catalysis, while the other monomer binds to the replacement base PreQ1. It depends on Zn(2+) as a cofactor.

It carries out the reaction 7-aminomethyl-7-carbaguanine + guanosine(34) in tRNA = 7-aminomethyl-7-carbaguanosine(34) in tRNA + guanine. It functions in the pathway tRNA modification; tRNA-queuosine biosynthesis. Its function is as follows. Catalyzes the base-exchange of a guanine (G) residue with the queuine precursor 7-aminomethyl-7-deazaguanine (PreQ1) at position 34 (anticodon wobble position) in tRNAs with GU(N) anticodons (tRNA-Asp, -Asn, -His and -Tyr). Catalysis occurs through a double-displacement mechanism. The nucleophile active site attacks the C1' of nucleotide 34 to detach the guanine base from the RNA, forming a covalent enzyme-RNA intermediate. The proton acceptor active site deprotonates the incoming PreQ1, allowing a nucleophilic attack on the C1' of the ribose to form the product. After dissociation, two additional enzymatic reactions on the tRNA convert PreQ1 to queuine (Q), resulting in the hypermodified nucleoside queuosine (7-(((4,5-cis-dihydroxy-2-cyclopenten-1-yl)amino)methyl)-7-deazaguanosine). The protein is Queuine tRNA-ribosyltransferase of Buchnera aphidicola subsp. Acyrthosiphon pisum (strain 5A).